We begin with the raw amino-acid sequence, 465 residues long: D(1C) dopamine receptor (465 aa).

Residues 1 to 30 are Extracellular-facing; the sequence is MENFSIFNVTVNVWHADLDVGNSDLSLRAL. N3 and N8 each carry an N-linked (GlcNAc...) asparagine glycan. Residues 31–54 traverse the membrane as a helical segment; sequence TGLLLSLLILSTLLGNTLVCLAVI. Residues 55–65 are Cytoplasmic-facing; it reads KFRHLRSKVTN. A helical membrane pass occupies residues 66-92; sequence FFVISLAVSDLFVALLVMPWKAVTEVA. The Extracellular portion of the chain corresponds to 93 to 101; that stretch reads GFWVFGDFC. Residues C101 and C187 are joined by a disulfide bond. Residues 102–124 form a helical membrane-spanning segment; the sequence is DTWVAFDIMCSTASILNLCIISL. The Cytoplasmic portion of the chain corresponds to 125–143; sequence DRYWAIASPFRYERKMTQR. A helical transmembrane segment spans residues 144 to 168; it reads VAFIMIGVAWTLSILISFIPVQLSW. The Extracellular portion of the chain corresponds to 169–193; the sequence is HKSHEADEELNGVNHTENCDSSLNR. Residues 194 to 219 form a helical membrane-spanning segment; sequence TYAISSSLISFYIPVVIMIGTYTRIY. Topologically, residues 220-264 are cytoplasmic; sequence RIAQTQIRRISSLERAVEHAQRCSSRLSNENSLKTSFRKETKVLK. The helical transmembrane segment at 265-291 threads the bilayer; sequence TLSIIMGVFVFCWLPFFVLNCMIPFCH. The Extracellular portion of the chain corresponds to 292 to 309; that stretch reads MNLPGQNEPEPPCVSETT. Residues 310–334 form a helical membrane-spanning segment; sequence FNIFVWFGWANSSLNPVIYAFNADF. At 335 to 465 the chain is on the cytoplasmic side; that stretch reads RKAFTTILGC…EDRHYTTKLY (131 aa). The S-palmitoyl cysteine moiety is linked to residue C344.

The protein belongs to the G-protein coupled receptor 1 family. In terms of tissue distribution, brain and kidney.

It is found in the cell membrane. It localises to the cell projection. The protein localises to the cilium membrane. In terms of biological role, this is one of the five types (D1 to D5) of receptors for dopamine. The activity of this receptor is mediated by G proteins which activate adenylyl cyclase. The sequence is that of D(1C) dopamine receptor (drd1c) from Xenopus laevis (African clawed frog).